The sequence spans 198 residues: NADH-quinone oxidoreductase subunit B (198 aa).

4 residues coordinate [4Fe-4S] cluster: Cys-62, Cys-63, Cys-128, and Cys-158.

It belongs to the complex I 20 kDa subunit family. NDH-1 is composed of 14 different subunits. Subunits NuoB, C, D, E, F, and G constitute the peripheral sector of the complex. [4Fe-4S] cluster is required as a cofactor.

The protein resides in the cell inner membrane. The enzyme catalyses a quinone + NADH + 5 H(+)(in) = a quinol + NAD(+) + 4 H(+)(out). Its function is as follows. NDH-1 shuttles electrons from NADH, via FMN and iron-sulfur (Fe-S) centers, to quinones in the respiratory chain. The immediate electron acceptor for the enzyme in this species is believed to be a menaquinone. Couples the redox reaction to proton translocation (for every two electrons transferred, four hydrogen ions are translocated across the cytoplasmic membrane), and thus conserves the redox energy in a proton gradient. In Phocaeicola vulgatus (strain ATCC 8482 / DSM 1447 / JCM 5826 / CCUG 4940 / NBRC 14291 / NCTC 11154) (Bacteroides vulgatus), this protein is NADH-quinone oxidoreductase subunit B.